Here is a 100-residue protein sequence, read N- to C-terminus: Large ribosomal subunit protein uL23 (100 aa).

The protein belongs to the universal ribosomal protein uL23 family. As to quaternary structure, part of the 50S ribosomal subunit. Contacts protein L29, and trigger factor when it is bound to the ribosome.

Functionally, one of the early assembly proteins it binds 23S rRNA. One of the proteins that surrounds the polypeptide exit tunnel on the outside of the ribosome. Forms the main docking site for trigger factor binding to the ribosome. The chain is Large ribosomal subunit protein uL23 from Photobacterium profundum (strain SS9).